The following is a 76-amino-acid chain: DNA-directed RNA polymerase subunit epsilon (76 aa).

Belongs to the RNA polymerase subunit epsilon family. As to quaternary structure, RNAP is composed of a core of 2 alpha, a beta and a beta' subunit. The core is associated with a delta subunit, and at least one of epsilon or omega. When a sigma factor is associated with the core the holoenzyme is formed, which can initiate transcription.

It carries out the reaction RNA(n) + a ribonucleoside 5'-triphosphate = RNA(n+1) + diphosphate. In terms of biological role, a non-essential component of RNA polymerase (RNAP). This is DNA-directed RNA polymerase subunit epsilon from Streptococcus equi subsp. equi (strain 4047).